The following is a 434-amino-acid chain: APETALA2-like protein 2 (434 aa).

A disordered region spans residues 1 to 116 (MLLDLNVESP…KTRRGPRSRS (116 aa)). Residues 12 to 23 (RSGTSSSSVLNS) show a composition bias toward low complexity. Gly residues predominate over residues 25-38 (DAGGGGGGGGGGGL). Positions 72 to 87 (LPPPPPAAPSPAPAWQ) are enriched in pro residues. Residues 104-113 (VAKKTRRGPR) are compositionally biased toward basic residues. The short motif at 106–115 (KKTRRGPRSR) is the Nuclear localization signal element. 2 consecutive DNA-binding regions (AP2/ERF) follow at residues 118 to 174 (QYRG…INFN) and 210 to 267 (KFRG…TNFE). Residues 291-295 (LDLRI) carry the EAR motif.

Belongs to the AP2/ERF transcription factor family. AP2 subfamily. In terms of assembly, may form homodimer. Interacts with TPR2/ASP1. Highly expressed in developing panicles and in young seedlings. Present at low levels at all developmental stages.

Its subcellular location is the nucleus. In terms of biological role, probable transcription factor. Involved in spikelet transition. Together with SNB, controls synergistically inflorescence architecture and floral meristem establishment via the regulation of spatio-temporal expression of B- and E-function floral organ identity genes in the lodicules and of spikelet meristem genes. Prevents lemma and palea elongation as well as grain growth. The polypeptide is APETALA2-like protein 2 (Oryza sativa subsp. japonica (Rice)).